Here is a 972-residue protein sequence, read N- to C-terminus: FHF complex subunit HOOK-interacting protein 1B (972 aa).

Disordered regions lie at residues 465–496, 510–547, 573–642, and 710–733; these read APSP…VPRP, SLSG…AGEL, SAPY…PGSW, and SFTC…NQLP. At serine 467 the chain carries Phosphoserine. The segment covering 479–490 has biased composition (low complexity); the sequence is GPGSPSVDSSSV. Serine 510, serine 523, serine 529, and serine 533 each carry phosphoserine. A compositionally biased stretch (low complexity) spans 523 to 535; it reads SPGLSASPASSPG. The segment covering 618-627 has biased composition (gly residues); that stretch reads GLAGGAGEGP. Residues serine 859 and serine 897 each carry the phosphoserine modification.

The protein belongs to the FHIP family. As to quaternary structure, component of the FTS/Hook/FHIP complex (FHF complex), composed of AKTIP/FTS, FHIP1B, and one or more members of the Hook family of proteins HOOK1, HOOK2, and HOOK3. The FHF complex associates with the homotypic vesicular sorting complex (the HOPS complex).

Component of the FTS/Hook/FHIP complex (FHF complex). The FHF complex may function to promote vesicle trafficking and/or fusion via the homotypic vesicular protein sorting complex (the HOPS complex). FHF complex promotes the distribution of AP-4 complex to the perinuclear area of the cell. The chain is FHF complex subunit HOOK-interacting protein 1B (FHIP1B) from Pongo abelii (Sumatran orangutan).